The primary structure comprises 427 residues: ATP-dependent RNA helicase DDX39A (427 aa).

Residues 1–19 are compositionally biased toward acidic residues; the sequence is MAEQDVENDLLDYDEEEEP. The tract at residues 1-34 is disordered; sequence MAEQDVENDLLDYDEEEEPQAPQESTPAPPKKDI. N-acetylalanine is present on A2. Residue K31 forms a Glycyl lysine isopeptide (Lys-Gly) (interchain with G-Cter in SUMO2) linkage. K35 is modified (N6-acetyllysine; alternate). A Glycyl lysine isopeptide (Lys-Gly) (interchain with G-Cter in SUMO2); alternate cross-link involves residue K35. S37 is modified (phosphoserine). The short motif at 44–72 is the Q motif element; sequence SGFRDFLLKPELLRAIVDCGFEHPSEVQH. The 174-residue stretch at 75–248 folds into the Helicase ATP-binding domain; that stretch reads IPQAILGMDV…RKFMQDPMEV (174 aa). 88-95 provides a ligand contact to ATP; it reads AKSGMGKT. Residues K154 and K162 each participate in a glycyl lysine isopeptide (Lys-Gly) (interchain with G-Cter in SUMO2) cross-link. At T171 the chain carries Phosphothreonine. The DECD box motif lies at 195–198; the sequence is DECD. Residues K240 and K255 each participate in a glycyl lysine isopeptide (Lys-Gly) (interchain with G-Cter in SUMO2) cross-link. Residues 260-421 enclose the Helicase C-terminal domain; that stretch reads GLQQYYVKLK…ELPEEIDIST (162 aa). S426 carries the phosphoserine modification.

The protein belongs to the DEAD box helicase family. DECD subfamily. In terms of assembly, binds ALYREF/THOC4 and DDX39B/BAT1. Interacts with the apo-AREX complex component SARNP. Interacts with MX1. Interacts with MCM3AP isoform GANP. Interacts with ECD. Interacts with PHAX; this interaction stimulates PHAX RNA binding activity. (Microbial infection) Interacts with human cytomegalovirus/HHV-5 protein UL69. Post-translationally, SUMOylated by RANBP2; SUMOylation modification affects its ability to bind RNA. As to expression, detected in testis, and at lower levels in brain, kidney, lung, thymus, spleen and salivary gland.

It localises to the nucleus. The protein resides in the cytoplasm. The catalysed reaction is ATP + H2O = ADP + phosphate + H(+). Functionally, helicase that plays an essential role in mRNA export and is involved in multiple steps in RNA metabolism including alternative splicing. Regulates nuclear mRNA export to the cytoplasm through association with ECD. Also involved in spliceosomal uridine-rich small nuclear RNA (U snRNA) export by stimulating the RNA binding of adapter PHAX. Plays a role in the negative regulation of type I IFN production by increasing the nuclear retention of antiviral transcripts and thus reducing their protein expression. Independently of the interferon pathway, plays an antiviral role against alphaviruses by binding to a 5' conserved sequence element in the viral genomic RNA. The polypeptide is ATP-dependent RNA helicase DDX39A (DDX39A) (Homo sapiens (Human)).